Reading from the N-terminus, the 407-residue chain is Digeranylgeranylglycerophospholipid reductase (407 aa).

FAD-binding residues include Ala-15, Glu-34, Cys-45, Ala-46, Gly-48, Arg-99, Ala-123, Asp-281, Gly-293, and Ile-294.

Belongs to the geranylgeranyl reductase family. DGGGPL reductase subfamily. It depends on FAD as a cofactor.

The enzyme catalyses a 2,3-bis-O-phytanyl-sn-glycerol 1-phospholipid + 8 oxidized 2[4Fe-4S]-[ferredoxin] = a 2,3-bis-O-(geranylgeranyl)-sn-glycerol 1-phospholipid + 8 reduced 2[4Fe-4S]-[ferredoxin] + 16 H(+). It catalyses the reaction 2,3-bis-O-(phytanyl)-sn-glycerol 1-phosphate + 8 oxidized 2[4Fe-4S]-[ferredoxin] = 2,3-bis-O-(geranylgeranyl)-sn-glycerol 1-phosphate + 8 reduced 2[4Fe-4S]-[ferredoxin] + 16 H(+). The catalysed reaction is a 2,3-bis-O-phytanyl-sn-glycerol 1-phospholipid + 8 A = a 2,3-bis-O-(geranylgeranyl)-sn-glycerol 1-phospholipid + 8 AH2. It carries out the reaction CDP-2,3-bis-O-(geranylgeranyl)-sn-glycerol + 8 AH2 = CDP-2,3-bis-O-(phytanyl)-sn-glycerol + 8 A. The enzyme catalyses archaetidylserine + 8 AH2 = 2,3-bis-O-phytanyl-sn-glycero-3-phospho-L-serine + 8 A. The protein operates within membrane lipid metabolism; glycerophospholipid metabolism. Is involved in the reduction of 2,3-digeranylgeranylglycerophospholipids (unsaturated archaeols) into 2,3-diphytanylglycerophospholipids (saturated archaeols) in the biosynthesis of archaeal membrane lipids. Catalyzes the formation of archaetidic acid (2,3-di-O-phytanyl-sn-glyceryl phosphate) from 2,3-di-O-geranylgeranylglyceryl phosphate (DGGGP) via the hydrogenation of each double bond of the isoprenoid chains. Requires the adjacently encoded ferredoxin MA_1485 as the electron donor. Is also probably able to reduce double bonds of geranyl groups in CDP-2,3-bis-O-(geranylgeranyl)-sn-glycerol and archaetidylserine, thus acting at various stages in the biosynthesis of archaeal membrane lipids. In Methanosarcina acetivorans (strain ATCC 35395 / DSM 2834 / JCM 12185 / C2A), this protein is Digeranylgeranylglycerophospholipid reductase.